Here is a 217-residue protein sequence, read N- to C-terminus: Probable cutinase 3 (217 aa).

The first 17 residues, 1–17, serve as a signal peptide directing secretion; that stretch reads MSLRSLFVAGLATLALA. Cystine bridges form between C39-C118 and C65-C79. S129 acts as the Nucleophile in catalysis. Residues C180 and C187 are joined by a disulfide bond. Residue D184 is part of the active site. The active-site Proton donor/acceptor is H197.

It belongs to the cutinase family.

It localises to the secreted. The catalysed reaction is cutin + H2O = cutin monomers.. Functionally, catalyzes the hydrolysis of complex carboxylic polyesters found in the cell wall of plants. Degrades cutin, a macromolecule that forms the structure of the plant cuticle. In Neosartorya fischeri (strain ATCC 1020 / DSM 3700 / CBS 544.65 / FGSC A1164 / JCM 1740 / NRRL 181 / WB 181) (Aspergillus fischerianus), this protein is Probable cutinase 3.